The chain runs to 89 residues: Large ribosomal subunit protein bL27 (89 aa).

A disordered region spans residues 1–24 (MAHKKAGGSSRNGRDSDGRRLGVK).

The protein belongs to the bacterial ribosomal protein bL27 family.

The sequence is that of Large ribosomal subunit protein bL27 from Azorhizobium caulinodans (strain ATCC 43989 / DSM 5975 / JCM 20966 / LMG 6465 / NBRC 14845 / NCIMB 13405 / ORS 571).